A 340-amino-acid chain; its full sequence is Putative Ig-like domain-containing protein C1 (340 aa).

In terms of domain architecture, Ig-like spans proline 207–isoleucine 294.

This is Putative Ig-like domain-containing protein C1 from Sus scrofa (Pig).